Reading from the N-terminus, the 333-residue chain is Probable G-protein coupled receptor 33 (333 aa).

At 1 to 30 the chain is on the extracellular side; that stretch reads MDLINSTDYLINASTLVRNSTQFLAPASKM. Asn-5, Asn-12, and Asn-19 each carry an N-linked (GlcNAc...) asparagine glycan. Residues 31 to 53 traverse the membrane as a helical segment; it reads IIALSLYISSIIGTITNGLYLWV. The Cytoplasmic portion of the chain corresponds to 54–64; it reads LRFKMKQTVNT. The chain crosses the membrane as a helical span at residues 65-86; sequence LLFFHLILSYFISTMILPFMAT. At 87–103 the chain is on the extracellular side; it reads SQLQDNHWNFGTALCKV. A disulfide bond links Cys-101 and Cys-179. A helical transmembrane segment spans residues 104 to 124; that stretch reads FNGTLSLGMFTSVFFLSAIGL. The Cytoplasmic portion of the chain corresponds to 125–143; that stretch reads DRYLLTLHPVWSQQHRTPR. The chain crosses the membrane as a helical span at residues 144 to 165; that stretch reads WASSIVLGVWISAAALSIPYLI. Topologically, residues 166-209 are extracellular; the sequence is FRQTHHDRKGKVTCQNNYAVSTNWESKEMQALRQWIHVACFISR. A helical membrane pass occupies residues 210 to 230; that stretch reads FLLGFLLPFFIIIFCYERVAS. Over 231–246 the chain is Cytoplasmic; sequence KVKERSLFKSSKPFKV. Residues 247-268 traverse the membrane as a helical segment; the sequence is MMTAIISFFVCWMPYHIHQGLL. At 269 to 283 the chain is on the extracellular side; it reads LTMNQSLLLELTLIL. A glycan (N-linked (GlcNAc...) asparagine) is linked at Asn-272. The chain crosses the membrane as a helical span at residues 284–303; that stretch reads TVLTTSFNTIFSPTLYLFVG. At 304–333 the chain is on the cytoplasmic side; that stretch reads ENFKKVFKKSILALFESTFSEDSSVERTQT.

The protein belongs to the G-protein coupled receptor 1 family.

It is found in the cell membrane. Functionally, orphan receptor; could be a chemoattractant receptor. The sequence is that of Probable G-protein coupled receptor 33 (GPR33) from Pan paniscus (Pygmy chimpanzee).